The following is a 173-amino-acid chain: uncharacterized protein (173 aa).

Positions 1–15 (MERKLSQRAGNTFKG) are cleaved as a propeptide — leader sequence. At F16 the chain carries N-methylphenylalanine. The helical transmembrane segment at 16-37 (FTLVEVLITLAIISLVFSLILI) threads the bilayer.

The protein resides in the membrane. This is an uncharacterized protein from Aquifex aeolicus (strain VF5).